The sequence spans 432 residues: Cyclic GMP-AMP synthase-like receptor (432 aa).

ATP-binding positions include serine 59 and 71 to 73; that span reads EFD. 3 residues coordinate Mg(2+): glutamate 71, aspartate 73, and aspartate 205. Residues aspartate 205 and 255–262 each bind GTP; that span reads KQTCSVLE. Residues 259–262, lysine 284, and 303–307 contribute to the ATP site; these read SVLE and TYALK.

It belongs to the mab-21 family. Mg(2+) serves as cofactor. It depends on Mn(2+) as a cofactor.

The catalysed reaction is GTP + ATP = 2',3'-cGAMP + 2 diphosphate. The enzyme catalyses GTP + ATP = pppGp(2'-5')A + diphosphate. It carries out the reaction pppGp(2'-5')A = 2',3'-cGAMP + diphosphate. Nucleotidyltransferase that catalyzes the formation of cyclic GMP-AMP (2',3'-cGAMP) from ATP and GTP and plays a key role in innate immunity. Directly binds some unknown ligand, activating the nucleotidyltransferase activity, leading to synthesis of 2',3'-cGAMP, a second messenger that binds to and activates Sting, thereby triggering the immune response via activation of the NF-kappa-B transcription factor. The sequence is that of Cyclic GMP-AMP synthase-like receptor from Pocillopora damicornis (Cauliflower coral).